The following is a 166-amino-acid chain: Large ribosomal subunit protein uL10 (166 aa).

This sequence belongs to the universal ribosomal protein uL10 family. Part of the ribosomal stalk of the 50S ribosomal subunit. The N-terminus interacts with L11 and the large rRNA to form the base of the stalk. The C-terminus forms an elongated spine to which L12 dimers bind in a sequential fashion forming a multimeric L10(L12)X complex.

Functionally, forms part of the ribosomal stalk, playing a central role in the interaction of the ribosome with GTP-bound translation factors. The polypeptide is Large ribosomal subunit protein uL10 (Listeria monocytogenes serotype 4b (strain CLIP80459)).